The following is a 375-amino-acid chain: Stimulator of interferon genes protein 2 (375 aa).

The next 4 helical transmembrane spans lie at 30-50, 60-80, 114-134, and 144-164; these read TATV…LLAV, IHFL…GELV, AGSI…VLYE, and YPIL…LVGL. 3 residues coordinate 2',3'-cGAMP: tyrosine 195, arginine 256, and arginine 262.

Belongs to the STING family.

It localises to the membrane. In terms of biological role, facilitator of innate immune signaling that acts as a sensor of second messenger signals produced by cyclic GMP-AMP synthase-like receptors (cGLRs) and promotes the production of type I interferon. Innate immune response is triggered in response to nucleotides from viruses and bacteria delivered to the cytoplasm. Acts by binding cyclic dinucleotides: recognizes and binds 2'-3' linked cGAMP (2'-3'-cGAMP), a second messengers produced by cGLRs in response to nucleotides in the cytosol, such as double-stranded RNA (dsRNA). Upon binding to 2'-3'-cGAMP, oligomerizes and promotes the recruitment and subsequent activation of the transcription factor IRF3 to induce expression of type I interferon. The protein is Stimulator of interferon genes protein 2 of Stylophora pistillata (Smooth cauliflower coral).